Consider the following 386-residue polypeptide: Short integuments 2, mitochondrial (386 aa).

Residues 37-207 (TRAIRNRLKL…VLDSPGVLVP (171 aa)) form the CP-type G domain. Residues 55–59 (DARIP) carry the DARXP motif motif. The segment at 81 to 84 (NKKD) is G4. GTP-binding positions include 81 to 84 (NKKD), 109 to 110 (NA), and 146 to 151 (NVGKSA). The G5 stretch occupies residues 109–111 (NAH). The G1 stretch occupies residues 143 to 150 (GVPNVGKS). Positions 180-184 (GVTQD) are G2. Residues 200-203 (DSPG) are G3. Residue glycine 203 participates in GTP binding.

This sequence belongs to the TRAFAC class YlqF/YawG GTPase family. MTG1 subfamily. In terms of tissue distribution, expressed in seedlings, roots, leaves, stems, inflorescences and siliques.

It is found in the mitochondrion. GTPase that may function in mitochondrial ribosome assembly. Involved in a variety of growth processes during vegetative development and promotes growth and cell division in the developing integuments. In Arabidopsis thaliana (Mouse-ear cress), this protein is Short integuments 2, mitochondrial.